The sequence spans 487 residues: Cysteine--tRNA ligase (487 aa).

Cysteine 30 lines the Zn(2+) pocket. The short motif at 32–42 is the 'HIGH' region element; that stretch reads PTVYGHAHLGH. The Zn(2+) site is built by cysteine 226, histidine 251, and glutamate 255. Positions 283-287 match the 'KMSKS' region motif; it reads KMGKS. Lysine 286 serves as a coordination point for ATP.

This sequence belongs to the class-I aminoacyl-tRNA synthetase family. As to quaternary structure, monomer. It depends on Zn(2+) as a cofactor.

It localises to the cytoplasm. The catalysed reaction is tRNA(Cys) + L-cysteine + ATP = L-cysteinyl-tRNA(Cys) + AMP + diphosphate. The chain is Cysteine--tRNA ligase (cysS) from Chlorobaculum tepidum (strain ATCC 49652 / DSM 12025 / NBRC 103806 / TLS) (Chlorobium tepidum).